We begin with the raw amino-acid sequence, 433 residues long: Serine/threonine-protein kinase KDX1 (433 aa).

The region spanning F23–L318 is the Protein kinase domain. ATP contacts are provided by residues I29–I37 and K55. The active-site Proton acceptor is the D153.

This sequence belongs to the protein kinase superfamily. Ser/Thr protein kinase family. As to quaternary structure, interacts with RLM1.

The enzyme catalyses L-seryl-[protein] + ATP = O-phospho-L-seryl-[protein] + ADP + H(+). The catalysed reaction is L-threonyl-[protein] + ATP = O-phospho-L-threonyl-[protein] + ADP + H(+). Serine/threonine-protein kinase involved in the SLT2 mitogen-activated (MAP) kinase signaling pathway that regulates cell wall integrity. May also be involved in the mating pheromone and the CWI MAPK pathways. This Saccharomyces cerevisiae (strain ATCC 204508 / S288c) (Baker's yeast) protein is Serine/threonine-protein kinase KDX1 (KDX1).